The chain runs to 489 residues: Glycogen synthase (489 aa).

ADP-alpha-D-glucose is bound at residue Lys-15.

It belongs to the glycosyltransferase 1 family. Bacterial/plant glycogen synthase subfamily.

The catalysed reaction is [(1-&gt;4)-alpha-D-glucosyl](n) + ADP-alpha-D-glucose = [(1-&gt;4)-alpha-D-glucosyl](n+1) + ADP + H(+). It functions in the pathway glycan biosynthesis; glycogen biosynthesis. Synthesizes alpha-1,4-glucan chains using ADP-glucose. The polypeptide is Glycogen synthase (Francisella tularensis subsp. tularensis (strain SCHU S4 / Schu 4)).